The primary structure comprises 283 residues: Acetyl-coenzyme A carboxylase carboxyl transferase subunit beta (283 aa).

Residues 29–283 form the CoA carboxyltransferase N-terminal domain; that stretch reads LWISCPKCQQ…VKIHSMKGAF (255 aa). Zn(2+) contacts are provided by Cys33, Cys36, Cys51, and Cys54. The segment at 33–54 adopts a C4-type zinc-finger fold; it reads CPKCQQSIYHKDLGKYKTCPNC.

Belongs to the AccD/PCCB family. In terms of assembly, acetyl-CoA carboxylase is a heterohexamer composed of biotin carboxyl carrier protein (AccB), biotin carboxylase (AccC) and two subunits each of ACCase subunit alpha (AccA) and ACCase subunit beta (AccD). The cofactor is Zn(2+).

The protein localises to the cytoplasm. It carries out the reaction N(6)-carboxybiotinyl-L-lysyl-[protein] + acetyl-CoA = N(6)-biotinyl-L-lysyl-[protein] + malonyl-CoA. It functions in the pathway lipid metabolism; malonyl-CoA biosynthesis; malonyl-CoA from acetyl-CoA: step 1/1. In terms of biological role, component of the acetyl coenzyme A carboxylase (ACC) complex. Biotin carboxylase (BC) catalyzes the carboxylation of biotin on its carrier protein (BCCP) and then the CO(2) group is transferred by the transcarboxylase to acetyl-CoA to form malonyl-CoA. This is Acetyl-coenzyme A carboxylase carboxyl transferase subunit beta from Ligilactobacillus salivarius (strain UCC118) (Lactobacillus salivarius).